A 93-amino-acid chain; its full sequence is Small ribosomal subunit protein uS19 (93 aa).

The protein belongs to the universal ribosomal protein uS19 family.

Its function is as follows. Protein S19 forms a complex with S13 that binds strongly to the 16S ribosomal RNA. The polypeptide is Small ribosomal subunit protein uS19 (Mycobacteroides abscessus (strain ATCC 19977 / DSM 44196 / CCUG 20993 / CIP 104536 / JCM 13569 / NCTC 13031 / TMC 1543 / L948) (Mycobacterium abscessus)).